The sequence spans 269 residues: Nitrogen regulatory protein DAL80 (269 aa).

A GATA-type zinc finger spans residues 31 to 55 (CQNCFTVKTPLWRRDEHGTVLCNAC).

The protein resides in the nucleus. Negative regulator of multiple nitrogen catabolic genes including the allantoin pathway genes. This is Nitrogen regulatory protein DAL80 (DAL80) from Saccharomyces cerevisiae (strain ATCC 204508 / S288c) (Baker's yeast).